The sequence spans 148 residues: Histone H2B.1 (148 aa).

The span at 1-35 (MAPRAEKKPAEKKTAAERPVEENKAAEKAPAEKKP) shows a compositional bias: basic and acidic residues. Residues 1–56 (MAPRAEKKPAEKKTAAERPVEENKAAEKAPAEKKPKAGKKLPPKEAGDKKKKRSKK) are disordered. A N,N,N-trimethylalanine; alternate modification is found at Ala2. Position 2 is a n,N-dimethylalanine; alternate (Ala2). Ala2 carries the post-translational modification N-methylalanine; alternate. Position 7 is an N6-acetyllysine; partial (Lys7). An N6-acetyllysine modification is found at Lys12. The residue at position 13 (Lys13) is an N6,N6-dimethyllysine. An N6-acetyllysine mark is found at Lys28, Lys33, and Lys39. Lys40 carries the N6-acetyllysine; partial modification. A Glycyl lysine isopeptide (Lys-Gly) (interchain with G-Cter in ubiquitin) cross-link involves residue Lys144.

It belongs to the histone H2B family. The nucleosome is a histone octamer containing two molecules each of H2A, H2B, H3 and H4 assembled in one H3-H4 heterotetramer and two H2A-H2B heterodimers. The octamer wraps approximately 147 bp of DNA. Interacts with AHL27. Post-translationally, can be acetylated to form H2BK6ac, H2BK33ac and H2BK34ac. In terms of processing, mono-, di- or trimethylated at the N-terminus to form H2BA1me1/2/3. H2BA1me2 may be acetylated to form H2BA1me2K6ac. Monoubiquitinated by BRE1 to form H2BK143ub1 and deubiquitinated by UBP26. Required for heterochromatic histone H3 di- and trimethylation at H3K4me. May give a specific tag for epigenetic transcriptional activation.

It localises to the nucleus. Its subcellular location is the chromosome. Functionally, core component of nucleosome. Nucleosomes wrap and compact DNA into chromatin, limiting DNA accessibility to the cellular machineries which require DNA as a template. Histones thereby play a central role in transcription regulation, DNA repair, DNA replication and chromosomal stability. DNA accessibility is regulated via a complex set of post-translational modifications of histones, also called histone code, and nucleosome remodeling. This Arabidopsis thaliana (Mouse-ear cress) protein is Histone H2B.1.